The primary structure comprises 529 residues: Bifunctional purine biosynthesis protein PurH (529 aa).

In terms of domain architecture, MGS-like spans 2 to 149; sequence TNLVPVGRAL…KNHRFVNVVT (148 aa).

The protein belongs to the PurH family.

The catalysed reaction is (6R)-10-formyltetrahydrofolate + 5-amino-1-(5-phospho-beta-D-ribosyl)imidazole-4-carboxamide = 5-formamido-1-(5-phospho-D-ribosyl)imidazole-4-carboxamide + (6S)-5,6,7,8-tetrahydrofolate. It carries out the reaction IMP + H2O = 5-formamido-1-(5-phospho-D-ribosyl)imidazole-4-carboxamide. Its pathway is purine metabolism; IMP biosynthesis via de novo pathway; 5-formamido-1-(5-phospho-D-ribosyl)imidazole-4-carboxamide from 5-amino-1-(5-phospho-D-ribosyl)imidazole-4-carboxamide (10-formyl THF route): step 1/1. The protein operates within purine metabolism; IMP biosynthesis via de novo pathway; IMP from 5-formamido-1-(5-phospho-D-ribosyl)imidazole-4-carboxamide: step 1/1. This chain is Bifunctional purine biosynthesis protein PurH, found in Cereibacter sphaeroides (strain ATCC 17029 / ATH 2.4.9) (Rhodobacter sphaeroides).